The chain runs to 198 residues: Peroxiredoxin-2 (198 aa).

The residue at position 2 (alanine 2) is an N-acetylalanine. A Thioredoxin domain is found at 6–164; that stretch reads AQIGKSAPDF…ALRLVQAFQY (159 aa). Phosphoserine is present on serine 11. Residue cysteine 51 is the Cysteine sulfenic acid (-SOH) intermediate of the active site. At serine 112 the chain carries Phosphoserine. Phosphothreonine is present on threonine 182. N6-acetyllysine is present on lysine 196.

This sequence belongs to the peroxiredoxin family. AhpC/Prx1 subfamily. Homodimer; disulfide-linked, upon oxidation. 5 homodimers assemble to form a ring-like decamer. Interacts with TIPIN. In terms of processing, the enzyme can be inactivated by further oxidation of the cysteine sulfenic acid (C(P)-SOH) to sulphinic acid (C(P)-SO2H) instead of its condensation to a disulfide bond. It can be reactivated by forming a transient disulfide bond with sulfiredoxin SRXN1, which reduces the cysteine sulfinic acid in an ATP- and Mg-dependent manner. Acetylation increases resistance to transition to high molecular-mass complexes. Deacetylated by HDAC6 which decreases reducing activity. In terms of tissue distribution, widely expressed with highest levels in bone marrow. High levels also found in heart, brain, kidney and skeletal muscle. Lower levels in liver, lung and thymus.

It is found in the cytoplasm. It catalyses the reaction a hydroperoxide + [thioredoxin]-dithiol = an alcohol + [thioredoxin]-disulfide + H2O. Thiol-specific peroxidase that catalyzes the reduction of hydrogen peroxide and organic hydroperoxides to water and alcohols, respectively. Plays a role in cell protection against oxidative stress by detoxifying peroxides and as sensor of hydrogen peroxide-mediated signaling events. Might participate in the signaling cascades of growth factors and tumor necrosis factor-alpha by regulating the intracellular concentrations of H(2)O(2). In Mus musculus (Mouse), this protein is Peroxiredoxin-2 (Prdx2).